Reading from the N-terminus, the 66-residue chain is Toxin NaTx-4 (66 aa).

Positions 1 to 64 (KEGYLVNKET…TFPIPGKTCS (64 aa)) constitute an LCN-type CS-alpha/beta domain. 4 disulfide bridges follow: Cys-12/Cys-63, Cys-16/Cys-39, Cys-25/Cys-44, and Cys-29/Cys-46.

It belongs to the long (4 C-C) scorpion toxin superfamily. Sodium channel inhibitor family. In terms of tissue distribution, expressed by the venom gland.

It localises to the secreted. Its function is as follows. Probable sodium channel inhibitor. In Centruroides sculpturatus (Arizona bark scorpion), this protein is Toxin NaTx-4.